The chain runs to 362 residues: Very-long-chain (3R)-3-hydroxyacyl-CoA dehydratase (362 aa).

Residues 1–149 (MADCSLRPHV…DPFKHLKKGY (149 aa)) lie on the Cytoplasmic side of the membrane. One can recognise a CS domain in the interval 5-94 (SLRPHVHWAQ…KESSWWERLT (90 aa)). Residues 111 to 135 (LDESDAEMELKEKEEEKINKMKIES) are a coiled coil. The helical transmembrane segment at 150 to 170 (LIMYNLVQFLGFSWIFVNMTV) threads the bilayer. Topologically, residues 171–189 (RLFILGKDSFYDTFHTIAD) are lumenal. Residues 190-210 (MMYFCQTLALMEILNSLIGLV) form a helical membrane-spanning segment. The Cytoplasmic segment spans residues 211-212 (RS). A helical membrane pass occupies residues 213–233 (PLIPAVIQVFGRNFILFVVLG). Residues 234-242 (SLEEMQSKA) are Lumenal-facing. A helical membrane pass occupies residues 243-263 (VVFFLFYFWSIIELFRYPYYM). Over 264–282 (LSCMGIEWKPLTWLRYTSW) the chain is Cytoplasmic. A helical transmembrane segment spans residues 283–303 (IPLYPLGGLAEAVCLIQSIPI). Active-site residues include Y286 and E293. The Lumenal portion of the chain corresponds to 304-319 (FSETGKFSLGLPNPLN). Residues 320-340 (VTIQFSFLLQMYLIALFLGLF) traverse the membrane as a helical segment. Topologically, residues 341-362 (VNFRYLYKQRKQHLGPKKRKMK) are cytoplasmic.

Belongs to the very long-chain fatty acids dehydratase HACD family.

It is found in the endoplasmic reticulum membrane. It catalyses the reaction a very-long-chain (3R)-3-hydroxyacyl-CoA = a very-long-chain (2E)-enoyl-CoA + H2O. It carries out the reaction (3R)-hydroxyhexadecanoyl-CoA = (2E)-hexadecenoyl-CoA + H2O. The protein operates within lipid metabolism; fatty acid biosynthesis. Its function is as follows. Catalyzes the third of the four reactions of the long-chain fatty acids elongation cycle. This endoplasmic reticulum-bound enzymatic process, allows the addition of two carbons to the chain of long- and very long-chain fatty acids/VLCFAs per cycle. This enzyme catalyzes the dehydration of the 3-hydroxyacyl-CoA intermediate into trans-2,3-enoyl-CoA, within each cycle of fatty acid elongation. Thereby, it participates in the production of VLCFAs of different chain lengths that are involved in multiple biological processes as precursors of membrane lipids and lipid mediators. Involved in Rac1-signaling pathways leading to the modulation of gene expression. The chain is Very-long-chain (3R)-3-hydroxyacyl-CoA dehydratase from Gallus gallus (Chicken).